Consider the following 495-residue polypeptide: Pentatricopeptide repeat-containing protein PPR5 homolog, chloroplastic (495 aa).

The segment at 1-24 is disordered; sequence MLAYPTTSSPWPPRHHGAAAAPAA. The transit peptide at 1-29 directs the protein to the chloroplast; the sequence is MLAYPTTSSPWPPRHHGAAAAPAARRHMA. PPR repeat units follow at residues 120–154, 155–189, 195–229, 230–264, 265–299, 300–334, 335–365, 370–404, and 405–439; these read DNGI…GCRP, DTSV…MKTI, NIVT…PVSP, DIYT…QCRP, DVIT…KEKP, THPT…GFKP, NYVT…LVSS, HLSS…GAVP, and SAST…GIVP. The tract at residues 455–495 is disordered; sequence DKKPRTVPSKNSASKPDVESANNSGTDTSSKPNLSVWQVAA. The segment covering 462–495 has biased composition (polar residues); it reads PSKNSASKPDVESANNSGTDTSSKPNLSVWQVAA.

The protein belongs to the PPR family. P subfamily.

Its subcellular location is the plastid. The protein localises to the chloroplast. Its function is as follows. Involved in the biogenesis of the plastid translation machinery by promoting the splicing of group II introns in chloroplasts. The sequence is that of Pentatricopeptide repeat-containing protein PPR5 homolog, chloroplastic from Oryza sativa subsp. japonica (Rice).